Consider the following 288-residue polypeptide: Heme oxygenase 1 (288 aa).

The Cytoplasmic segment spans residues 1-265; sequence MERPQPDSMP…KTPLNTHSQA (265 aa). 4 residues coordinate heme b: Lys-18, His-25, Tyr-134, and Arg-183. Positions 223–260 are disordered; sequence HDTKDQSPSRAPGLRQRASNKAQDSAPVETPRGKTPLN. Ser-229 bears the Phosphoserine mark. A helical; Anchor for type IV membrane protein membrane pass occupies residues 266–288; the sequence is PLLRWVLTLSFLVATVAVGLYAM.

This sequence belongs to the heme oxygenase family. Homodimer and higher order homooligomer. Oligomerization is crucial for its stability and function in the endoplasmic reticulum. Interacts with FLVCR2; this interaction is potentiated in the presence of heme. Post-translationally, a soluble form arises by proteolytic removal of the membrane anchor.

It is found in the endoplasmic reticulum membrane. It carries out the reaction heme b + 3 reduced [NADPH--hemoprotein reductase] + 3 O2 = biliverdin IXalpha + CO + Fe(2+) + 3 oxidized [NADPH--hemoprotein reductase] + 3 H2O + H(+). Its function is as follows. Catalyzes the oxidative cleavage of heme at the alpha-methene bridge carbon, released as carbon monoxide (CO), to generate biliverdin IXalpha, while releasing the central heme iron chelate as ferrous iron. Affords protection against programmed cell death and this cytoprotective effect relies on its ability to catabolize free heme and prevent it from sensitizing cells to undergo apoptosis. Functionally, catalyzes the oxidative cleavage of heme at the alpha-methene bridge carbon, released as carbon monoxide (CO), to generate biliverdin IXalpha, while releasing the central heme iron chelate as ferrous iron. This Pongo abelii (Sumatran orangutan) protein is Heme oxygenase 1 (HMOX1).